The following is a 523-amino-acid chain: Signal peptide peptidase-like 2A (523 aa).

Positions Met1 to Ala25 are cleaved as a signal peptide. Over Gln26–Leu175 the chain is Lumenal. N-linked (GlcNAc...) asparagine glycans are attached at residues Asn51, Asn61, Asn69, Asn119, Asn129, and Asn135. Positions Leu70–Leu155 constitute a PA domain. A helical membrane pass occupies residues Val176–Ile196. Residues Glu197 to Pro224 are Cytoplasmic-facing. Residues Leu225–Tyr245 traverse the membrane as a helical segment. Residues Arg246–Trp247 are Lumenal-facing. Residues Leu248–Leu268 traverse the membrane as a helical segment. The Cytoplasmic segment spans residues Ser269–Asn288. A helical membrane pass occupies residues Ile289–Val309. Over Phe310–Arg315 the chain is Lumenal. The helical transmembrane segment at Trp316 to Met336 threads the bilayer. At Lys337–Cys344 the chain is on the cytoplasmic side. Residues Val345 to Ile365 form a helical membrane-spanning segment. Residue Asp355 is part of the active site. Topologically, residues Thr366–Ser403 are lumenal. The chain crosses the membrane as a helical span at residues Val404–Ile424. The active site involves Asp416. Residues Ala425–Tyr440 lie on the Cytoplasmic side of the membrane. A helical membrane pass occupies residues Ile441–Met461. Residues Lys462–Thr463 lie on the Lumenal side of the membrane. A helical membrane pass occupies residues Gly464–Trp484. The PAL motif lies at Pro466–Leu468. Topologically, residues Ser485 to Gln523 are cytoplasmic. The YXXo lysosomal targeting motif motif lies at Tyr498–Met501.

The protein belongs to the peptidase A22B family. Interacts with ITM2B. In terms of processing, glycosylated.

It localises to the late endosome membrane. The protein localises to the lysosome membrane. The protein resides in the membrane. In terms of biological role, intramembrane-cleaving aspartic protease (I-CLiP) that cleaves type II membrane signal peptides in the hydrophobic plane of the membrane. Functions in FASLG, ITM2B and TNF processing. Catalyzes the intramembrane cleavage of the anchored fragment of shed TNF-alpha (TNF), which promotes the release of the intracellular domain (ICD) for signaling to the nucleus. Also responsible for the intramembrane cleavage of Fas antigen ligand FASLG, which promotes the release of the intracellular FasL domain (FasL ICD). Essential for degradation of the invariant chain CD74 that plays a central role in the function of antigen-presenting cells in the immune system. Plays a role in the regulation of innate and adaptive immunity. This is Signal peptide peptidase-like 2A from Mus musculus (Mouse).